The sequence spans 67 residues: Large ribosomal subunit protein bL35 (67 aa).

Belongs to the bacterial ribosomal protein bL35 family.

This is Large ribosomal subunit protein bL35 from Rhizorhabdus wittichii (strain DSM 6014 / CCUG 31198 / JCM 15750 / NBRC 105917 / EY 4224 / RW1) (Sphingomonas wittichii).